The primary structure comprises 835 residues: Leucine--tRNA ligase (835 aa).

The 'HIGH' region signature appears at 36–46; it reads PYPSGKIHVGH. The 'KMSKS' region motif lies at 602–606; sequence KMSKS. K605 lines the ATP pocket.

It belongs to the class-I aminoacyl-tRNA synthetase family.

It is found in the cytoplasm. The enzyme catalyses tRNA(Leu) + L-leucine + ATP = L-leucyl-tRNA(Leu) + AMP + diphosphate. In Rickettsia rickettsii (strain Iowa), this protein is Leucine--tRNA ligase.